The sequence spans 75 residues: Large ribosomal subunit protein bL31 (75 aa).

It belongs to the bacterial ribosomal protein bL31 family. Type A subfamily. In terms of assembly, part of the 50S ribosomal subunit.

Its function is as follows. Binds the 23S rRNA. In Chlorobium phaeobacteroides (strain BS1), this protein is Large ribosomal subunit protein bL31.